We begin with the raw amino-acid sequence, 654 residues long: Sucrose:sucrose 1-fructosyltransferase (654 aa).

Positions 1–106 are excised as a propeptide; the sequence is MESSAVVPGT…VSEKASGAYS (106 aa). A glycan (N-linked (GlcNAc...) asparagine) is linked at asparagine 32. Aspartate 136 is a catalytic residue. N-linked (GlcNAc...) asparagine glycosylation is found at asparagine 328, asparagine 457, asparagine 491, asparagine 506, and asparagine 625.

This sequence belongs to the glycosyl hydrolase 32 family. As to quaternary structure, monomer. In terms of tissue distribution, accumulates at the base of growing leaves.

The protein resides in the vacuole. The enzyme catalyses 2 sucrose = 1(F)-beta-D-fructosylsucrose + D-glucose. Transferase involved in fructan biosynthesis that catalyzes the production of 1-kestose (fructose and nystose to a lower extent) from sucrose. Also exhibits some hydrolase activity toward 1-kestose, thus producing fructose and sucrose. A weak fructosyltransferase activity leads to the formation of nystose from 1-kestose. This is Sucrose:sucrose 1-fructosyltransferase (1-SST) from Festuca arundinacea (Tall fescue).